The primary structure comprises 386 residues: GTPase Obg (386 aa).

An Obg domain is found at 1-159 (MKFVDEAKIK…RNLLLELLLL (159 aa)). The OBG-type G domain occupies 160 to 333 (ADVGMLGLPN…LCRDVVEYLE (174 aa)). GTP-binding positions include 166 to 173 (GLPNAGKS), 191 to 195 (FTTLV), 213 to 216 (DIPG), 283 to 286 (NKTD), and 314 to 316 (AAI). Mg(2+)-binding residues include Ser173 and Thr193.

This sequence belongs to the TRAFAC class OBG-HflX-like GTPase superfamily. OBG GTPase family. As to quaternary structure, monomer. Mg(2+) serves as cofactor.

It is found in the cytoplasm. Its function is as follows. An essential GTPase which binds GTP, GDP and possibly (p)ppGpp with moderate affinity, with high nucleotide exchange rates and a fairly low GTP hydrolysis rate. Plays a role in control of the cell cycle, stress response, ribosome biogenesis and in those bacteria that undergo differentiation, in morphogenesis control. This Psychromonas ingrahamii (strain DSM 17664 / CCUG 51855 / 37) protein is GTPase Obg.